The chain runs to 2082 residues: MAYFLPSFFQKRLLRYALSRLELVDTEALDLDSLGIRWGQRSTVELRDIGLRLEKLSTLLRLPPSSELLSARIRLLRLTVPADIYSSGIIFQTSGIDVHLRLPLNDVSADQDTHRSPTDDTGDDHVLPNPTDLAESFLQAEPKEEKEELQAAISSQSQVLQHTSTSSSDDEEEFGLGEEAVSLPSFVAGFLKGVVERLQVEVEDVSIRVDVETKQDGPSKRQPEEKPDLVTGLISVRQINVGAVSKSHDSEEGILRWGKRQISVSDVNLALISDPIVFSNYSRFTAPPLSPSTPVQSRPSQPPSEVMSPSPELNPSDSNPGLGMTQSTIFAPPQSDDEPVPEAPHELEMAGSVYTYDGRFSDADTEETRSYGHLGDSQNFSDDDKLLDNPDYLDSVIDSHLHDEDLERSVNLPRDDAPSAREEDTPRLHDSSTFNFEPTMAHHTLQEVSSPTIHGQVLEDRTGSFGSASLGRDASSEHSLPEDSLSENQHAEEPQHEVRAHMSGSQPAPPSEEGSSSSTSNSFRDGDLSESKIYSHEEAQSMYMSAISHGSTSRSFVPNIPGAWDSPGSTATRYFDVHNRSQCSGDTNRTRDEKDETTAATPRLHAQAGSHIPQEYPLDGSRTAHSEATDKGSFESTQGLNKLNDIAKRFLTIDKMSIWVPSRDGTDEPSGAVSEMSFSHGGVDPNVSGHSERRSYPKRSQDETAIELHSAEIHFDISTGWLLAKVGQRVVDAFAHNDSETPKKSRSQQDSHSDQAISLSFGKFSIKFVEHIPGHAYPPEDSRIHSPTYFGLMHEDVLLQTTVAGLQAHYSETGNATKLRLELAKFTLGFASEDLISFSEDLKMRESVRDVLSPVHGDVSLSLTKSADSARVNIATLPLQVNINVQRLEDVLGWIGGLSTILELGNSIPSVSGVKAQKEPPKRSRGVHFEPSPPPVKESRQPSIPWKVDSRIGGMALDVVGETHYLKLRTTAVKVVSRQKGIAVQIDKAKLSGPLSLEGTRDAPAKVNFTNIRVEFLFSPDDDDLDRLLSLITPSKDKYDEDDDIMLDTLLRQRRQGSILRATVDGARVAISRIQDLEHLSQLGDELGKLSNVTKYLPEDDRPGILSLALVRDFEARMHVGGQVGDITVRLKEAETAYISIPSLVAARLGSMTVVRNEIEELVGEALPLHMAQAQHPMLMARFIADEMEPTIKVKVYNLRAEYTVPSMVAFLGLSDDMTAGKVAENMTSSLVNLADLPPPHISPVSGGHESPRGPVKPIKLAVVLRDSVIGLNPRGTAAKGLLVLTNAKFSGAIHDPASSEATLDLRKASVMVIDDVQNIGITDNPRQGRWTTPQSDQVHSFIEMGFVPISSISSATATIRIMQLSEDGTKSLDVEFRDDLLILETCADSTQTLISIVNGLQPPTPPSVAVKYRTEVLPIQDMLASFSGDAFATDAASPEHAAEGSSDLAQPANTKGNQIEDELEYVSDFYPVKPGSENASLHENLAGSGSNELLDSFHSQYYMSSSVSELDFRDDHFAKQSAVGGTAHRWDSTQNTYGLSDDSKLQKSPLRIRVRDAHVIWNLFDGYDWQRTRDTISKAVKDVEKRATEKRARVGNRASPGFDDDEESVIGDCLFNSIYIGIPANKDPRELRQDINRGIDDLASETGSYATTTTVTGATARQNHSPPFKKKLRLSRSKYHKMTFELKGICADLVVFPPDSGETQSSLDVRIKDLEIFDHVPTSTWKKFATYMHEAGEKESGTSMVHLEVLTVRPVPELAASEIVLKATILPLRLHVDQDALDFLSRFFEFRDDSAPASPSPQDIPFLQRVEVNSIPVKLDFKPKRVDYAGLQSGRTTEFMNFFVLDGADMVMRHVIIYGIAGFDKLGQTLNDIWMPDIKRNQLPSVLAGLAPIRSLVNVGGGVKDLVVVPMREYRKDGRIVRSIQKGAWSFAKTTSNELVKLGAKLAIGTQTVLQGAEEMLTSPNAPVPVSEEDSTDEEEAKKISLYADQPIGVVQGLRGAFRGLERDLLLARDAIVAVPGEIVESGSATAAAKAVWKRAPTVVLRPAIGVSKAVGQTLLGAGNTLDPSNRRKMEDKYKRH.

Disordered regions lie at residues 108-130 (SADQDTHRSPTDDTGDDHVLPNP), 144-175 (EEKEELQAAISSQSQVLQHTSTSSSDDEEEFG), 285-343 (TAPP…VPEA), 365-435 (TEET…STFN), 462-527 (TGSF…RDGD), 580-636 (RSQC…SFES), 662-702 (SRDG…RSQD), 912-943 (SGVKAQKEPPKRSRGVHFEPSPPPVKESRQPS), 1435-1454 (DAASPEHAAEGSSDLAQPAN), and 2062-2082 (GAGNTLDPSNRRKMEDKYKRH). Positions 111–126 (QDTHRSPTDDTGDDHV) are enriched in basic and acidic residues. 2 stretches are compositionally biased toward polar residues: residues 152–162 (AISSQSQVLQH) and 311–329 (PELNPSDSNPGLGMTQSTI). Basic and acidic residues-rich tracts occupy residues 397 to 430 (IDSHLHDEDLERSVNLPRDDAPSAREEDTPRLHD) and 489 to 500 (QHAEEPQHEVRA). A compositionally biased stretch (low complexity) spans 503-522 (SGSQPAPPSEEGSSSSTSNS). Basic and acidic residues-rich tracts occupy residues 588 to 597 (NRTRDEKDET), 622 to 633 (RTAHSEATDKGS), and 690 to 702 (HSERRSYPKRSQD). Residues 2070–2082 (SNRRKMEDKYKRH) are compositionally biased toward basic and acidic residues.

The protein belongs to the ATG2 family.

Its subcellular location is the preautophagosomal structure membrane. It is found in the endoplasmic reticulum membrane. It carries out the reaction a 1,2-diacyl-sn-glycero-3-phosphocholine(in) = a 1,2-diacyl-sn-glycero-3-phosphocholine(out). It catalyses the reaction a 1,2-diacyl-sn-glycero-3-phospho-L-serine(in) = a 1,2-diacyl-sn-glycero-3-phospho-L-serine(out). The catalysed reaction is a 1,2-diacyl-sn-glycero-3-phosphoethanolamine(in) = a 1,2-diacyl-sn-glycero-3-phosphoethanolamine(out). Lipid transfer protein required for autophagosome completion and peroxisome degradation. Tethers the edge of the isolation membrane (IM) to the endoplasmic reticulum (ER) and mediates direct lipid transfer from ER to IM for IM expansion. Atg2 binds to the ER exit site (ERES), which is the membrane source for autophagosome formation, using basic residues in its N-terminal region (NR) and to the expanding edge of the IM through its C-terminal region. The latter binding is assisted by an atg18-PtdIns3P interaction. Atg2 then extracts phospholipids from the membrane source using its NR and transfers them to atg9 to the IM through its predicted beta-sheet-rich structure for membrane expansion. This is Autophagy-related protein 2 (atg2) from Aspergillus terreus (strain NIH 2624 / FGSC A1156).